We begin with the raw amino-acid sequence, 300 residues long: MIKTIQKELEGLDIRFDEPLKKYTYTKVGGPADYLAFPRNRLELSRIVKFANSQNIPWMVLGNASNIIVRDGGIRGFVIMFDKLSTVTVNGYVIEAEAGANLIETTRIARYHSLTGFEFACGIPGSVGGAVFMNAGAYGGEIAHILLSAQVLTPQGELKTIEARNMQFGYRHSVIQESGDIVISAKFALKPGDHLMITQEMDRLTYLRELKQPLEYPSCGSVFKRPPGHFAGQLISEAHLKGQRIGGVEVSQKHAGFMVNIAEGSAQDYENLIEHVINTVESTSGVHLEPEVRIIGESLL.

In terms of domain architecture, FAD-binding PCMH-type spans 27–192 (KVGGPADYLA…ISAKFALKPG (166 aa)). Arginine 171 is an active-site residue. Serine 221 serves as the catalytic Proton donor. Glutamate 291 is a catalytic residue.

It belongs to the MurB family. FAD is required as a cofactor.

The protein resides in the cytoplasm. The catalysed reaction is UDP-N-acetyl-alpha-D-muramate + NADP(+) = UDP-N-acetyl-3-O-(1-carboxyvinyl)-alpha-D-glucosamine + NADPH + H(+). The protein operates within cell wall biogenesis; peptidoglycan biosynthesis. Functionally, cell wall formation. This is UDP-N-acetylenolpyruvoylglucosamine reductase from Streptococcus agalactiae serotype Ia (strain ATCC 27591 / A909 / CDC SS700).